We begin with the raw amino-acid sequence, 421 residues long: Gamma-glutamyl phosphate reductase (421 aa).

It belongs to the gamma-glutamyl phosphate reductase family.

It localises to the cytoplasm. The enzyme catalyses L-glutamate 5-semialdehyde + phosphate + NADP(+) = L-glutamyl 5-phosphate + NADPH + H(+). Its pathway is amino-acid biosynthesis; L-proline biosynthesis; L-glutamate 5-semialdehyde from L-glutamate: step 2/2. Catalyzes the NADPH-dependent reduction of L-glutamate 5-phosphate into L-glutamate 5-semialdehyde and phosphate. The product spontaneously undergoes cyclization to form 1-pyrroline-5-carboxylate. In Pseudomonas fluorescens (strain ATCC BAA-477 / NRRL B-23932 / Pf-5), this protein is Gamma-glutamyl phosphate reductase.